The primary structure comprises 200 residues: Recombination protein RecR (200 aa).

The segment at 57–72 (CRSCRTLTEEELCPQC) adopts a C4-type zinc-finger fold. A Toprim domain is found at 80–175 (TLLCVVEGPT…VASRIAHGVP (96 aa)).

Belongs to the RecR family.

Its function is as follows. May play a role in DNA repair. It seems to be involved in an RecBC-independent recombinational process of DNA repair. It may act with RecF and RecO. In Pseudomonas savastanoi pv. phaseolicola (strain 1448A / Race 6) (Pseudomonas syringae pv. phaseolicola (strain 1448A / Race 6)), this protein is Recombination protein RecR.